Reading from the N-terminus, the 499-residue chain is Aspartyl/glutamyl-tRNA(Asn/Gln) amidotransferase subunit B (499 aa).

The protein belongs to the GatB/GatE family. GatB subfamily. As to quaternary structure, heterotrimer of A, B and C subunits.

It catalyses the reaction L-glutamyl-tRNA(Gln) + L-glutamine + ATP + H2O = L-glutaminyl-tRNA(Gln) + L-glutamate + ADP + phosphate + H(+). The enzyme catalyses L-aspartyl-tRNA(Asn) + L-glutamine + ATP + H2O = L-asparaginyl-tRNA(Asn) + L-glutamate + ADP + phosphate + 2 H(+). In terms of biological role, allows the formation of correctly charged Asn-tRNA(Asn) or Gln-tRNA(Gln) through the transamidation of misacylated Asp-tRNA(Asn) or Glu-tRNA(Gln) in organisms which lack either or both of asparaginyl-tRNA or glutaminyl-tRNA synthetases. The reaction takes place in the presence of glutamine and ATP through an activated phospho-Asp-tRNA(Asn) or phospho-Glu-tRNA(Gln). In Mesorhizobium japonicum (strain LMG 29417 / CECT 9101 / MAFF 303099) (Mesorhizobium loti (strain MAFF 303099)), this protein is Aspartyl/glutamyl-tRNA(Asn/Gln) amidotransferase subunit B.